A 198-amino-acid polypeptide reads, in one-letter code: Putative 3-methyladenine DNA glycosylase (198 aa).

The protein belongs to the DNA glycosylase MPG family.

This is Putative 3-methyladenine DNA glycosylase from Oceanobacillus iheyensis (strain DSM 14371 / CIP 107618 / JCM 11309 / KCTC 3954 / HTE831).